The primary structure comprises 32 residues: Protein YthB (32 aa).

In Escherichia coli (strain K12), this protein is Protein YthB.